The primary structure comprises 1158 residues: Rho1 guanine nucleotide exchange factor 2 (1158 aa).

Residues 42–141 (RSSGSITHSP…SFSVSDVSNG (100 aa)) are disordered. Positions 45 to 63 (GSITHSPTALSSTTSLNEN) are enriched in polar residues. Positions 68-81 (FRPASSLSFSPSSL) are enriched in low complexity. Over residues 97–108 (KNNFYRRSSSTD) the composition is skewed to polar residues. Over residues 132–141 (SFSVSDVSNG) the composition is skewed to low complexity. Residues 447-634 (KRQEIIFEVI…REFLTKLNYE (188 aa)) enclose the DH domain. A PH domain is found at 670 to 805 (LIFKGVVKLK…QHIEKQQDII (136 aa)). 2 positions are modified to phosphoserine: S746 and S747. Residues 825–1120 (GNKLLCAVAY…KLLTDGRGLI (296 aa)) enclose the CNH domain.

The protein localises to the cytoplasm. Stimulates the exchange of Rho1 and Rho5 GDP-bound form into GTP-bound form. Controls septum formation, cell wall synthesis and localization of F-actin patches. This is Rho1 guanine nucleotide exchange factor 2 (rgf2) from Schizosaccharomyces pombe (strain 972 / ATCC 24843) (Fission yeast).